Consider the following 347-residue polypeptide: Probable dual-specificity RNA methyltransferase RlmN (347 aa).

The active-site Proton acceptor is Glu91. Residues 97 to 327 (YKYGNSICVS…ATVRREMGSD (231 aa)) enclose the Radical SAM core domain. A disulfide bridge links Cys104 with Cys332. Residues Cys111, Cys115, and Cys118 each contribute to the [4Fe-4S] cluster site. S-adenosyl-L-methionine contacts are provided by residues 158-159 (GE), Ser190, 213-215 (SLH), and Asn289. Catalysis depends on Cys332, which acts as the S-methylcysteine intermediate.

It belongs to the radical SAM superfamily. RlmN family. The cofactor is [4Fe-4S] cluster.

Its subcellular location is the cytoplasm. The catalysed reaction is adenosine(2503) in 23S rRNA + 2 reduced [2Fe-2S]-[ferredoxin] + 2 S-adenosyl-L-methionine = 2-methyladenosine(2503) in 23S rRNA + 5'-deoxyadenosine + L-methionine + 2 oxidized [2Fe-2S]-[ferredoxin] + S-adenosyl-L-homocysteine. It carries out the reaction adenosine(37) in tRNA + 2 reduced [2Fe-2S]-[ferredoxin] + 2 S-adenosyl-L-methionine = 2-methyladenosine(37) in tRNA + 5'-deoxyadenosine + L-methionine + 2 oxidized [2Fe-2S]-[ferredoxin] + S-adenosyl-L-homocysteine. Its function is as follows. Specifically methylates position 2 of adenine 2503 in 23S rRNA and position 2 of adenine 37 in tRNAs. The protein is Probable dual-specificity RNA methyltransferase RlmN of Clostridium perfringens (strain 13 / Type A).